Here is a 426-residue protein sequence, read N- to C-terminus: Trigger factor (426 aa).

Positions 160-240 (GDTVIGDVTK…IKEVKHLELP (81 aa)) constitute a PPIase FKBP-type domain.

This sequence belongs to the FKBP-type PPIase family. Tig subfamily.

The protein localises to the cytoplasm. It carries out the reaction [protein]-peptidylproline (omega=180) = [protein]-peptidylproline (omega=0). Functionally, involved in protein export. Acts as a chaperone by maintaining the newly synthesized protein in an open conformation. Functions as a peptidyl-prolyl cis-trans isomerase. This is Trigger factor from Chlorobaculum tepidum (strain ATCC 49652 / DSM 12025 / NBRC 103806 / TLS) (Chlorobium tepidum).